The sequence spans 305 residues: tRNA uridine(34) hydroxylase (305 aa).

Residues 126–220 (SDPEVIVIDT…YLEQIPPEES (95 aa)) form the Rhodanese domain. Cysteine 180 serves as the catalytic Cysteine persulfide intermediate.

Belongs to the TrhO family.

It catalyses the reaction uridine(34) in tRNA + AH2 + O2 = 5-hydroxyuridine(34) in tRNA + A + H2O. Catalyzes oxygen-dependent 5-hydroxyuridine (ho5U) modification at position 34 in tRNAs. In Trichormus variabilis (strain ATCC 29413 / PCC 7937) (Anabaena variabilis), this protein is tRNA uridine(34) hydroxylase.